We begin with the raw amino-acid sequence, 1325 residues long: SCAN domain-containing protein 3 (1325 aa).

The SCAN box domain maps to 52 to 134 (RQRFRQFCYQ…TLLEDLEREL (83 aa)). Residues 246-275 (KAKYCQLIKEVKEAKAKAKKESVDYRRLAR) adopt a coiled-coil conformation. Residues 366–526 (KSIKEVSSRC…TPCESAFSSE (161 aa)) enclose the Integrase catalytic domain. Residues 542–568 (ASLHTENELDQADKELENTLRAQYEEN) adopt a coiled-coil conformation.

In terms of tissue distribution, weakly expressed in the lung (at protein level).

The protein localises to the nucleus. The polypeptide is SCAN domain-containing protein 3 (Homo sapiens (Human)).